Consider the following 210-residue polypeptide: Glutathione S-transferase P (210 aa).

The GST N-terminal domain maps to 2–81; that stretch reads PPYTIVYFPV…HLGRSLGLYG (80 aa). Tyr4 bears the Phosphotyrosine; by EGFR mark. Residues Tyr8, Arg14, Trp39, Lys45, and 52–53 each bind glutathione; that span reads QL. At Thr62 the chain carries Phosphothreonine. Residue 65-66 participates in glutathione binding; that stretch reads QS. The 122-residue stretch at 83–204 folds into the GST C-terminal domain; sequence DQKEAALVDM…SSPDHLNRPI (122 aa). 2 positions are modified to N6-succinyllysine: Lys103 and Lys116. Lys128 is modified (N6-acetyllysine).

The protein belongs to the GST superfamily. Pi family. As to quaternary structure, homodimer. Interacts with CDK5. Present in kidney, lung, testis and placenta, very low levels in liver.

The protein resides in the cytoplasm. It localises to the mitochondrion. The protein localises to the nucleus. It catalyses the reaction RX + glutathione = an S-substituted glutathione + a halide anion + H(+). The enzyme catalyses prostaglandin J2 + glutathione = prostaglandin J2-S-(R)-glutathione. The catalysed reaction is prostaglandin J2 + glutathione = prostaglandin J2-S-(S)-glutathione. It carries out the reaction prostaglandin A2 + glutathione = prostaglandin A2-S-(S)-glutathione. It catalyses the reaction 11(S)-hydroxy-14(S),15(S)-epoxy-(5Z,8Z,12E)-eicosatrienoate + glutathione = (11S,15S)-dihydroxy-14(R)-S-glutathionyl-(5Z,8Z,12E)-eicosatrienoate. Functionally, conjugation of reduced glutathione to a wide number of exogenous and endogenous hydrophobic electrophiles. Involved in the formation of glutathione conjugates of both prostaglandin A2 (PGA2) and prostaglandin J2 (PGJ2). Participates in the formation of novel hepoxilin regioisomers. Negatively regulates CDK5 activity via p25/p35 translocation to prevent neurodegeneration. This chain is Glutathione S-transferase P, found in Rattus norvegicus (Rat).